The chain runs to 279 residues: uncharacterized protein (279 aa).

A disordered region spans residues threonine 136–aspartate 279. The span at asparagine 228–serine 238 shows a compositional bias: low complexity.

This is an uncharacterized protein from Invertebrate iridescent virus 3 (IIV-3).